Consider the following 86-residue polypeptide: Anti-adapter protein IraP (86 aa).

Positions 1–36 (MKNLIAELLFKLAQKEEESKELCAQVEALEIIVTAM) form a coiled coil.

It belongs to the IraP family. In terms of assembly, interacts with RssB.

Its subcellular location is the cytoplasm. Its function is as follows. Inhibits RpoS proteolysis by regulating RssB activity, thereby increasing the stability of the sigma stress factor RpoS especially during phosphate starvation, but also in stationary phase and during nitrogen starvation. Its effect on RpoS stability is due to its interaction with RssB, which probably blocks the interaction of RssB with RpoS, and the consequent delivery of the RssB-RpoS complex to the ClpXP protein degradation pathway. The chain is Anti-adapter protein IraP from Shigella sonnei (strain Ss046).